Consider the following 491-residue polypeptide: Protein nucleotidyltransferase YdiU (491 aa).

Positions 94, 96, 97, 117, 129, 130, 180, and 187 each coordinate ATP. The Proton acceptor role is filled by D256. Residues N257 and D266 each contribute to the Mg(2+) site. D266 serves as a coordination point for ATP.

This sequence belongs to the SELO family. The cofactor is Mg(2+). Mn(2+) is required as a cofactor.

The enzyme catalyses L-seryl-[protein] + ATP = 3-O-(5'-adenylyl)-L-seryl-[protein] + diphosphate. It carries out the reaction L-threonyl-[protein] + ATP = 3-O-(5'-adenylyl)-L-threonyl-[protein] + diphosphate. The catalysed reaction is L-tyrosyl-[protein] + ATP = O-(5'-adenylyl)-L-tyrosyl-[protein] + diphosphate. It catalyses the reaction L-histidyl-[protein] + UTP = N(tele)-(5'-uridylyl)-L-histidyl-[protein] + diphosphate. The enzyme catalyses L-seryl-[protein] + UTP = O-(5'-uridylyl)-L-seryl-[protein] + diphosphate. It carries out the reaction L-tyrosyl-[protein] + UTP = O-(5'-uridylyl)-L-tyrosyl-[protein] + diphosphate. Nucleotidyltransferase involved in the post-translational modification of proteins. It can catalyze the addition of adenosine monophosphate (AMP) or uridine monophosphate (UMP) to a protein, resulting in modifications known as AMPylation and UMPylation. The sequence is that of Protein nucleotidyltransferase YdiU from Clostridium botulinum (strain Eklund 17B / Type B).